The chain runs to 526 residues: Lysine--tRNA ligase (526 aa).

The 'HIGH' region motif lies at 44–52 (PSGLPHIGT). Residues 290 to 294 (KISKS) carry the 'KMSKS' region motif. Residue K293 coordinates ATP.

Belongs to the class-I aminoacyl-tRNA synthetase family.

The protein localises to the cytoplasm. The catalysed reaction is tRNA(Lys) + L-lysine + ATP = L-lysyl-tRNA(Lys) + AMP + diphosphate. This chain is Lysine--tRNA ligase, found in Rickettsia typhi (strain ATCC VR-144 / Wilmington).